Here is a 382-residue protein sequence, read N- to C-terminus: D-galactonate dehydratase (382 aa).

Aspartate 183 provides a ligand contact to Mg(2+). The Proton donor role is filled by histidine 185. 2 residues coordinate Mg(2+): glutamate 209 and glutamate 235. The active-site Proton acceptor is the histidine 285.

It belongs to the mandelate racemase/muconate lactonizing enzyme family. GalD subfamily. It depends on Mg(2+) as a cofactor.

The catalysed reaction is D-galactonate = 2-dehydro-3-deoxy-D-galactonate + H2O. It participates in carbohydrate acid metabolism; D-galactonate degradation; D-glyceraldehyde 3-phosphate and pyruvate from D-galactonate: step 1/3. Functionally, catalyzes the dehydration of D-galactonate to 2-keto-3-deoxy-D-galactonate. The chain is D-galactonate dehydratase from Salmonella choleraesuis (strain SC-B67).